Consider the following 876-residue polypeptide: Alanine--tRNA ligase (876 aa).

Position 74 is an N6-acetyllysine (K74). H564, H568, C666, and H670 together coordinate Zn(2+).

Belongs to the class-II aminoacyl-tRNA synthetase family. Homotetramer. Zn(2+) serves as cofactor.

The protein resides in the cytoplasm. The enzyme catalyses tRNA(Ala) + L-alanine + ATP = L-alanyl-tRNA(Ala) + AMP + diphosphate. Catalyzes the attachment of alanine to tRNA(Ala) in a two-step reaction: alanine is first activated by ATP to form Ala-AMP and then transferred to the acceptor end of tRNA(Ala). Also edits incorrectly charged Ser-tRNA(Ala) and Gly-tRNA(Ala) via its editing domain. This Shigella boydii serotype 18 (strain CDC 3083-94 / BS512) protein is Alanine--tRNA ligase.